Reading from the N-terminus, the 546-residue chain is CTP synthase (546 aa).

Residues 1 to 269 (MNSNTKIIFV…DAKLVELLNL (269 aa)) are amidoligase domain. Ser16 contacts CTP. A UTP-binding site is contributed by Ser16. ATP-binding positions include 17–22 (SLGKGV) and Asp74. Mg(2+) is bound by residues Asp74 and Glu143. Residues 150 to 152 (DIE), 190 to 195 (KTKPTQ), and Lys226 contribute to the CTP site. UTP is bound by residues 190 to 195 (KTKPTQ) and Lys226. A Glutamine amidotransferase type-1 domain is found at 294–546 (TIAMVGKYVS…IQAAIENSNN (253 aa)). An L-glutamine-binding site is contributed by Gly356. The Nucleophile; for glutamine hydrolysis role is filled by Cys383. L-glutamine-binding positions include 384-387 (LGMQ), Glu407, and Arg474. Residues His519 and Glu521 contribute to the active site.

It belongs to the CTP synthase family. In terms of assembly, homotetramer.

The enzyme catalyses UTP + L-glutamine + ATP + H2O = CTP + L-glutamate + ADP + phosphate + 2 H(+). It carries out the reaction L-glutamine + H2O = L-glutamate + NH4(+). It catalyses the reaction UTP + NH4(+) + ATP = CTP + ADP + phosphate + 2 H(+). It participates in pyrimidine metabolism; CTP biosynthesis via de novo pathway; CTP from UDP: step 2/2. Its activity is regulated as follows. Allosterically activated by GTP, when glutamine is the substrate; GTP has no effect on the reaction when ammonia is the substrate. The allosteric effector GTP functions by stabilizing the protein conformation that binds the tetrahedral intermediate(s) formed during glutamine hydrolysis. Inhibited by the product CTP, via allosteric rather than competitive inhibition. In terms of biological role, catalyzes the ATP-dependent amination of UTP to CTP with either L-glutamine or ammonia as the source of nitrogen. Regulates intracellular CTP levels through interactions with the four ribonucleotide triphosphates. This Francisella tularensis subsp. mediasiatica (strain FSC147) protein is CTP synthase.